The chain runs to 382 residues: Opsin-VA (382 aa).

Over 1 to 35 (MELFPVAVNGVSHAEDPFSGPLTFIAPWNYKVLAT) the chain is Extracellular. The chain crosses the membrane as a helical span at residues 36–56 (LMFVVTAASLSENFAVMLVTF). The Cytoplasmic segment spans residues 57-67 (RFTQLRKPLNY). A helical membrane pass occupies residues 68 to 88 (IIVNLSLADFLVSLTGGTISF). Over 89 to 103 (LTNYHGYFFLGKWAC) the chain is Extracellular. C103 and C180 are disulfide-bonded. A helical membrane pass occupies residues 104–124 (VLEGFAVTYFGIVALWSLAVL). Over 125-147 (AFERFFVICRPLGNIRLRGKHAA) the chain is Cytoplasmic. The helical transmembrane segment at 148-168 (LGLLFVWTFSFIWTIPPVLGW) threads the bilayer. Over 169–193 (SSYTVSKIGTTCEPNWYSGNFHDHT) the chain is Extracellular. The helical transmembrane segment at 194–214 (FIIAFFITCFILPLGVIVVCY) threads the bilayer. Residues 215–244 (CKLIKKLRKVSNTHGRLGNARKPERQVTRM) are Cytoplasmic-facing. A helical transmembrane segment spans residues 245-265 (VVVMIVAFMVAWTPYAAFSIV). The Extracellular segment spans residues 266–279 (VTAHPSIHLDPRLA). Residues 280-300 (AAPAFFSKTAAVYNPVIYVFM) traverse the membrane as a helical segment. An N6-(retinylidene)lysine modification is found at K287. The Cytoplasmic segment spans residues 301–382 (NKQFRKCLVQ…PIPENKVCPM (82 aa)). The span at 330–346 (RQGMTNESHTGEMSTIA) shows a compositional bias: polar residues. The interval 330–371 (RQGMTNESHTGEMSTIASRIPKDGSIPEKTQEHPGERRSLAH) is disordered. Over residues 349 to 368 (IPKDGSIPEKTQEHPGERRS) the composition is skewed to basic and acidic residues.

The protein belongs to the G-protein coupled receptor 1 family. Opsin subfamily. In terms of tissue distribution, expressed in a subset of retinal horizontal cells as well as in retinal ganglion cells.

It is found in the membrane. In Rutilus rutilus (Roach), this protein is Opsin-VA.